Consider the following 94-residue polypeptide: Large ribosomal subunit protein uL22 (94 aa).

Belongs to the universal ribosomal protein uL22 family. In terms of assembly, part of the 50S ribosomal subunit.

Functionally, this protein binds specifically to 23S rRNA; its binding is stimulated by other ribosomal proteins, e.g. L4, L17, and L20. It is important during the early stages of 50S assembly. It makes multiple contacts with different domains of the 23S rRNA in the assembled 50S subunit and ribosome. The globular domain of the protein is located near the polypeptide exit tunnel on the outside of the subunit, while an extended beta-hairpin is found that lines the wall of the exit tunnel in the center of the 70S ribosome. This Tomato big bud phytoplasma protein is Large ribosomal subunit protein uL22 (rplV).